Consider the following 313-residue polypeptide: D-alanine--D-alanine ligase (313 aa).

An ATP-grasp domain is found at 108-308; the sequence is KLVWQQTGVP…YSELVVKVLS (201 aa). Position 138-193 (138-193) interacts with ATP; that stretch reads VAKLGLPLFVKPASEGSSVAVLKVKTADALPAALSEAATHDKIVIVEKSIEGGGEY. Mg(2+)-binding residues include Asp262, Glu275, and Asn277.

Belongs to the D-alanine--D-alanine ligase family. The cofactor is Mg(2+). It depends on Mn(2+) as a cofactor.

The protein resides in the cytoplasm. The catalysed reaction is 2 D-alanine + ATP = D-alanyl-D-alanine + ADP + phosphate + H(+). Its pathway is cell wall biogenesis; peptidoglycan biosynthesis. In terms of biological role, cell wall formation. In Burkholderia vietnamiensis (strain G4 / LMG 22486) (Burkholderia cepacia (strain R1808)), this protein is D-alanine--D-alanine ligase.